A 413-amino-acid polypeptide reads, in one-letter code: Arginine biosynthesis bifunctional protein ArgJ (413 aa).

Residues T163, K189, T200, E286, N408, and T413 each contribute to the substrate site. Residue T200 is the Nucleophile of the active site.

It belongs to the ArgJ family. In terms of assembly, heterotetramer of two alpha and two beta chains.

It is found in the cytoplasm. It carries out the reaction N(2)-acetyl-L-ornithine + L-glutamate = N-acetyl-L-glutamate + L-ornithine. The enzyme catalyses L-glutamate + acetyl-CoA = N-acetyl-L-glutamate + CoA + H(+). Its pathway is amino-acid biosynthesis; L-arginine biosynthesis; L-ornithine and N-acetyl-L-glutamate from L-glutamate and N(2)-acetyl-L-ornithine (cyclic): step 1/1. It functions in the pathway amino-acid biosynthesis; L-arginine biosynthesis; N(2)-acetyl-L-ornithine from L-glutamate: step 1/4. Its function is as follows. Catalyzes two activities which are involved in the cyclic version of arginine biosynthesis: the synthesis of N-acetylglutamate from glutamate and acetyl-CoA as the acetyl donor, and of ornithine by transacetylation between N(2)-acetylornithine and glutamate. This chain is Arginine biosynthesis bifunctional protein ArgJ, found in Staphylococcus aureus (strain COL).